The sequence spans 440 residues: Lysine histidine transporter-like 6 (440 aa).

The segment covering 1–10 (MVSSSPVSPS) has biased composition (polar residues). The disordered stretch occupies residues 1-25 (MVSSSPVSPSKETDRKSGEKWTAED). Topologically, residues 1–31 (MVSSSPVSPSKETDRKSGEKWTAEDPSRPAK) are cytoplasmic. Residues 11–25 (KETDRKSGEKWTAED) show a composition bias toward basic and acidic residues. The helical transmembrane segment at 32-51 (WWYSTFHTVTAMIGAGVLSL) threads the bilayer. The Extracellular segment spans residues 52–61 (PYAMAYLGWG). Residues 62 to 82 (PGTFVLAMTWGLTLNTMWQMV) traverse the membrane as a helical segment. The Cytoplasmic segment spans residues 83–109 (QLHECVPGTRFDRYIDLGRYAFGPKLG). The helical transmembrane segment at 110–130 (PWIVLPQQLIVQVGCNIVYMV) threads the bilayer. Over 131 to 152 (TGGKCLKQFVEITCSTCTPVRQ) the chain is Extracellular. Residues 153–173 (SYWILGFGGVHFILSQLPNFN) traverse the membrane as a helical segment. Position 174 (S174) is a topological domain, cytoplasmic. The chain crosses the membrane as a helical span at residues 175–195 (VAGVSLAAAVMSLCYSTIAWG). The Extracellular segment spans residues 196–221 (GSIAHGRVPDVSYDYKATNPGDFTFR). The chain crosses the membrane as a helical span at residues 222–242 (VFNALGQISFAFAGHAVALEI). Residues 243–261 (QATMPSTPERPSKVPMWQG) are Cytoplasmic-facing. The helical transmembrane segment at 262–282 (VIGAYVVNAVCYFPVALICYW) threads the bilayer. The Extracellular portion of the chain corresponds to 283–300 (AFGQDVDDNVLMNLQRPA). The chain crosses the membrane as a helical span at residues 301–321 (WLIAAANLMVVVHVIGSYQVF). Over 322–353 (AMPVFDLLERMMVNKFGFKHGVVLRFFTRTIY) the chain is Cytoplasmic. Helical transmembrane passes span 354–374 (VAFT…LGFF) and 375–395 (GGFG…LIIK). Residues 396 to 399 (KPRR) are Cytoplasmic-facing. The chain crosses the membrane as a helical span at residues 400–420 (FSVTWFVNWISIIVGVFIMLA). Residues 421-440 (STIGGLRNIIADSSTYSFYA) are Extracellular-facing.

Belongs to the amino acid/polyamine transporter 2 family. Amino acid/auxin permease (AAAP) (TC 2.A.18.2) subfamily.

Its subcellular location is the cell membrane. Amino acid transporter. The polypeptide is Lysine histidine transporter-like 6 (Arabidopsis thaliana (Mouse-ear cress)).